The chain runs to 158 residues: Ribosome maturation factor RimP (158 aa).

Belongs to the RimP family.

The protein localises to the cytoplasm. Its function is as follows. Required for maturation of 30S ribosomal subunits. The chain is Ribosome maturation factor RimP from Lactobacillus gasseri (strain ATCC 33323 / DSM 20243 / BCRC 14619 / CIP 102991 / JCM 1131 / KCTC 3163 / NCIMB 11718 / NCTC 13722 / AM63).